The primary structure comprises 299 residues: UTP--glucose-1-phosphate uridylyltransferase 1 (299 aa).

This sequence belongs to the UDPGP type 2 family.

The catalysed reaction is alpha-D-glucose 1-phosphate + UTP + H(+) = UDP-alpha-D-glucose + diphosphate. It participates in carbohydrate metabolism; nucleotide-sugar metabolism. This is UTP--glucose-1-phosphate uridylyltransferase 1 (hasC1) from Streptococcus pyogenes serotype M6 (strain ATCC BAA-946 / MGAS10394).